A 235-amino-acid polypeptide reads, in one-letter code: Ornithine decarboxylase antizyme 3 (235 aa).

Phosphoserine occurs at positions 9 and 12.

The protein belongs to the ODC antizyme family. Interacts with ODC1 and thereby sterically blocks ODC homodimerization. Interacts with AZIN2; this interaction disrupts the interaction between the antizyme and ODC1. Interacts with GGN. In terms of tissue distribution, testis specific.

The protein localises to the nucleus. The protein resides in the cytoplasm. Functionally, ornithine decarboxylase (ODC) antizyme protein that negatively regulates ODC activity and intracellular polyamine biosynthesis and uptake in response to increased intracellular polyamine levels. Binds to ODC monomers, inhibiting the assembly of the functional ODC homodimers. Does not target the ODC monomers for degradation, which allows a protein synthesis-independent restoration of ODC activity. Stabilizes AZIN2 by interfering with its ubiquitination. Involved in the translocation of AZNI2 from ER-Golgi intermediate compartment (ERGIC) to the cytosol. Probably plays a key role in spermatogenesis by regulating the intracellular concentration of polyamines in haploid germ cells. In Homo sapiens (Human), this protein is Ornithine decarboxylase antizyme 3 (OAZ3).